A 158-amino-acid polypeptide reads, in one-letter code: 6,7-dimethyl-8-ribityllumazine synthase (158 aa).

5-amino-6-(D-ribitylamino)uracil-binding positions include Phe23, 61–63 (SFE), and 85–87 (AVI). 90–91 (ET) contacts (2S)-2-hydroxy-3-oxobutyl phosphate. Residue His93 is the Proton donor of the active site. Phe118 contacts 5-amino-6-(D-ribitylamino)uracil. Residue Arg132 coordinates (2S)-2-hydroxy-3-oxobutyl phosphate.

It belongs to the DMRL synthase family.

It catalyses the reaction (2S)-2-hydroxy-3-oxobutyl phosphate + 5-amino-6-(D-ribitylamino)uracil = 6,7-dimethyl-8-(1-D-ribityl)lumazine + phosphate + 2 H2O + H(+). Its pathway is cofactor biosynthesis; riboflavin biosynthesis; riboflavin from 2-hydroxy-3-oxobutyl phosphate and 5-amino-6-(D-ribitylamino)uracil: step 1/2. Functionally, catalyzes the formation of 6,7-dimethyl-8-ribityllumazine by condensation of 5-amino-6-(D-ribitylamino)uracil with 3,4-dihydroxy-2-butanone 4-phosphate. This is the penultimate step in the biosynthesis of riboflavin. The sequence is that of 6,7-dimethyl-8-ribityllumazine synthase from Prochlorococcus marinus (strain MIT 9312).